The following is a 235-amino-acid chain: Small ribosomal subunit protein eS6 (235 aa).

The tract at residues 190-212 is disordered; it reads GFHPRERGERRRKSVRGRMIPDP.

Belongs to the eukaryotic ribosomal protein eS6 family.

The sequence is that of Small ribosomal subunit protein eS6 from Aeropyrum pernix (strain ATCC 700893 / DSM 11879 / JCM 9820 / NBRC 100138 / K1).